Consider the following 116-residue polypeptide: SPbeta prophage-derived uncharacterized protein YoqA (116 aa).

The polypeptide is SPbeta prophage-derived uncharacterized protein YoqA (yoqA) (Bacillus subtilis (strain 168)).